Here is a 150-residue protein sequence, read N- to C-terminus: UPF0178 protein PBPRA1738 (150 aa).

It belongs to the UPF0178 family.

The chain is UPF0178 protein PBPRA1738 from Photobacterium profundum (strain SS9).